The primary structure comprises 522 residues: Tetratricopeptide repeat protein 39C (522 aa).

3 TPR repeats span residues 254 to 287, 292 to 325, and 424 to 457; these read SLFM…AVDQ, HVCL…SRWS, and GLKH…ESCR.

This sequence belongs to the TTC39 family.

This is Tetratricopeptide repeat protein 39C (Ttc39c) from Rattus norvegicus (Rat).